The primary structure comprises 288 residues: Energy-coupling factor transporter ATP-binding protein EcfA2 (288 aa).

An ABC transporter domain is found at 3–246 (IKLEQLGYCY…PDELVDLGLS (244 aa)). 40-47 (GHTGSGKS) serves as a coordination point for ATP.

This sequence belongs to the ABC transporter superfamily. Energy-coupling factor EcfA family. Forms a stable energy-coupling factor (ECF) transporter complex composed of 2 membrane-embedded substrate-binding proteins (S component), 2 ATP-binding proteins (A component) and 2 transmembrane proteins (T component).

It is found in the cell membrane. Functionally, ATP-binding (A) component of a common energy-coupling factor (ECF) ABC-transporter complex. Unlike classic ABC transporters this ECF transporter provides the energy necessary to transport a number of different substrates. The sequence is that of Energy-coupling factor transporter ATP-binding protein EcfA2 from Listeria monocytogenes serotype 4b (strain F2365).